The sequence spans 29 residues: Cyclotide psyleio B (29 aa).

The segment at residues 1 to 29 (GDLPICGETCFGGTCNTPGCVCAWPVCNR) is a cross-link (cyclopeptide (Gly-Arg)). 3 cysteine pairs are disulfide-bonded: Cys-6–Cys-20, Cys-10–Cys-22, and Cys-15–Cys-27.

Post-translationally, this is a cyclic peptide.

In terms of biological role, probably participates in a plant defense mechanism. The polypeptide is Cyclotide psyleio B (Psychotria brachyceras).